Consider the following 291-residue polypeptide: Probable alpha-L-glutamate ligase (291 aa).

In terms of domain architecture, ATP-grasp spans 104-287 (HQLLASQGID…VAGTIIQHLE (184 aa)). Residues lysine 141, 178-179 (EF), aspartate 187, and 211-213 (RSN) contribute to the ATP site. The Mg(2+) site is built by aspartate 248, glutamate 260, and asparagine 262. Mn(2+) is bound by residues aspartate 248, glutamate 260, and asparagine 262.

This sequence belongs to the RimK family. Requires Mg(2+) as cofactor. Mn(2+) serves as cofactor.

The protein is Probable alpha-L-glutamate ligase of Xanthomonas campestris pv. campestris (strain 8004).